A 441-amino-acid chain; its full sequence is Ribulose bisphosphate carboxylase large chain (441 aa).

Substrate-binding residues include asparagine 89 and threonine 139. Catalysis depends on lysine 141, which acts as the Proton acceptor. Position 143 (lysine 143) interacts with substrate. Residues lysine 167, aspartate 169, and glutamate 170 each contribute to the Mg(2+) site. Lysine 167 is modified (N6-carboxylysine). Histidine 260 serves as the catalytic Proton acceptor. Residues residue 261 and serine 345 each contribute to the substrate site.

It belongs to the RuBisCO large chain family. Type I subfamily. Heterohexadecamer of 8 large chains and 8 small chains; disulfide-linked. The disulfide link is formed within the large subunit homodimers. Requires Mg(2+) as cofactor. In terms of processing, the disulfide bond which can form in the large chain dimeric partners within the hexadecamer appears to be associated with oxidative stress and protein turnover.

The protein localises to the plastid. The protein resides in the chloroplast. The enzyme catalyses 2 (2R)-3-phosphoglycerate + 2 H(+) = D-ribulose 1,5-bisphosphate + CO2 + H2O. It carries out the reaction D-ribulose 1,5-bisphosphate + O2 = 2-phosphoglycolate + (2R)-3-phosphoglycerate + 2 H(+). Functionally, ruBisCO catalyzes two reactions: the carboxylation of D-ribulose 1,5-bisphosphate, the primary event in carbon dioxide fixation, as well as the oxidative fragmentation of the pentose substrate in the photorespiration process. Both reactions occur simultaneously and in competition at the same active site. This is Ribulose bisphosphate carboxylase large chain from Asclepias exaltata (Poke milkweed).